The primary structure comprises 205 residues: Thiamine-phosphate synthase (205 aa).

4-amino-2-methyl-5-(diphosphooxymethyl)pyrimidine contacts are provided by residues 37–41 (QVREK) and asparagine 69. The Mg(2+) site is built by aspartate 70 and aspartate 89. Position 108 (serine 108) interacts with 4-amino-2-methyl-5-(diphosphooxymethyl)pyrimidine. 134–136 (TGS) serves as a coordination point for 2-[(2R,5Z)-2-carboxy-4-methylthiazol-5(2H)-ylidene]ethyl phosphate. Lysine 137 provides a ligand contact to 4-amino-2-methyl-5-(diphosphooxymethyl)pyrimidine. Residues glycine 165 and 185-186 (IS) each bind 2-[(2R,5Z)-2-carboxy-4-methylthiazol-5(2H)-ylidene]ethyl phosphate.

This sequence belongs to the thiamine-phosphate synthase family. It depends on Mg(2+) as a cofactor.

It catalyses the reaction 2-[(2R,5Z)-2-carboxy-4-methylthiazol-5(2H)-ylidene]ethyl phosphate + 4-amino-2-methyl-5-(diphosphooxymethyl)pyrimidine + 2 H(+) = thiamine phosphate + CO2 + diphosphate. The catalysed reaction is 2-(2-carboxy-4-methylthiazol-5-yl)ethyl phosphate + 4-amino-2-methyl-5-(diphosphooxymethyl)pyrimidine + 2 H(+) = thiamine phosphate + CO2 + diphosphate. The enzyme catalyses 4-methyl-5-(2-phosphooxyethyl)-thiazole + 4-amino-2-methyl-5-(diphosphooxymethyl)pyrimidine + H(+) = thiamine phosphate + diphosphate. It participates in cofactor biosynthesis; thiamine diphosphate biosynthesis; thiamine phosphate from 4-amino-2-methyl-5-diphosphomethylpyrimidine and 4-methyl-5-(2-phosphoethyl)-thiazole: step 1/1. Condenses 4-methyl-5-(beta-hydroxyethyl)thiazole monophosphate (THZ-P) and 2-methyl-4-amino-5-hydroxymethyl pyrimidine pyrophosphate (HMP-PP) to form thiamine monophosphate (TMP). The sequence is that of Thiamine-phosphate synthase from Clostridium botulinum (strain ATCC 19397 / Type A).